A 236-amino-acid chain; its full sequence is Ribonuclease P protein component 3 (236 aa).

The protein belongs to the eukaryotic/archaeal RNase P protein component 3 family. Consists of a catalytic RNA component and at least 4-5 protein subunits.

Its subcellular location is the cytoplasm. The catalysed reaction is Endonucleolytic cleavage of RNA, removing 5'-extranucleotides from tRNA precursor.. In terms of biological role, part of ribonuclease P, a protein complex that generates mature tRNA molecules by cleaving their 5'-ends. The sequence is that of Ribonuclease P protein component 3 from Natronomonas pharaonis (strain ATCC 35678 / DSM 2160 / CIP 103997 / JCM 8858 / NBRC 14720 / NCIMB 2260 / Gabara) (Halobacterium pharaonis).